We begin with the raw amino-acid sequence, 335 residues long: Holliday junction branch migration complex subunit RuvB (335 aa).

The tract at residues 4–184 (ADRIISTSAK…FGIVQRLEFY (181 aa)) is large ATPase domain (RuvB-L). ATP is bound by residues Ile23, Arg24, Gly65, Lys68, Thr69, Thr70, 131 to 133 (EDY), Arg174, Tyr184, and Arg221. Residue Thr69 participates in Mg(2+) binding. The small ATPAse domain (RuvB-S) stretch occupies residues 185–255 (AVEDLTSIVA…SAKAALLMLD (71 aa)). Positions 258–335 (DAGFDYLDRK…RYFGLEKLTE (78 aa)) are head domain (RuvB-H). Positions 294, 313, and 318 each coordinate DNA.

Belongs to the RuvB family. In terms of assembly, homohexamer. Forms an RuvA(8)-RuvB(12)-Holliday junction (HJ) complex. HJ DNA is sandwiched between 2 RuvA tetramers; dsDNA enters through RuvA and exits via RuvB. An RuvB hexamer assembles on each DNA strand where it exits the tetramer. Each RuvB hexamer is contacted by two RuvA subunits (via domain III) on 2 adjacent RuvB subunits; this complex drives branch migration. In the full resolvosome a probable DNA-RuvA(4)-RuvB(12)-RuvC(2) complex forms which resolves the HJ.

The protein resides in the cytoplasm. The catalysed reaction is ATP + H2O = ADP + phosphate + H(+). The RuvA-RuvB-RuvC complex processes Holliday junction (HJ) DNA during genetic recombination and DNA repair, while the RuvA-RuvB complex plays an important role in the rescue of blocked DNA replication forks via replication fork reversal (RFR). RuvA specifically binds to HJ cruciform DNA, conferring on it an open structure. The RuvB hexamer acts as an ATP-dependent pump, pulling dsDNA into and through the RuvAB complex. RuvB forms 2 homohexamers on either side of HJ DNA bound by 1 or 2 RuvA tetramers; 4 subunits per hexamer contact DNA at a time. Coordinated motions by a converter formed by DNA-disengaged RuvB subunits stimulates ATP hydrolysis and nucleotide exchange. Immobilization of the converter enables RuvB to convert the ATP-contained energy into a lever motion, pulling 2 nucleotides of DNA out of the RuvA tetramer per ATP hydrolyzed, thus driving DNA branch migration. The RuvB motors rotate together with the DNA substrate, which together with the progressing nucleotide cycle form the mechanistic basis for DNA recombination by continuous HJ branch migration. Branch migration allows RuvC to scan DNA until it finds its consensus sequence, where it cleaves and resolves cruciform DNA. In Pasteurella multocida (strain Pm70), this protein is Holliday junction branch migration complex subunit RuvB.